A 246-amino-acid chain; its full sequence is Hydroxyacylglutathione hydrolase (246 aa).

Residues H58, H60, D62, H63, H117, D137, and H175 each contribute to the Zn(2+) site.

It belongs to the metallo-beta-lactamase superfamily. Glyoxalase II family. In terms of assembly, monomer. It depends on Zn(2+) as a cofactor.

The catalysed reaction is an S-(2-hydroxyacyl)glutathione + H2O = a 2-hydroxy carboxylate + glutathione + H(+). The protein operates within secondary metabolite metabolism; methylglyoxal degradation; (R)-lactate from methylglyoxal: step 2/2. Functionally, thiolesterase that catalyzes the hydrolysis of S-D-lactoyl-glutathione to form glutathione and D-lactic acid. The protein is Hydroxyacylglutathione hydrolase of Prochlorococcus marinus (strain MIT 9312).